Here is a 256-residue protein sequence, read N- to C-terminus: Diacetyl reductase [(S)-acetoin forming] (256 aa).

NAD(+) is bound by residues 6–33 and D59; that span reads LVTG…AIAD. S139 contributes to the substrate binding site. Y152 (proton acceptor) is an active-site residue. K156 provides a ligand contact to NAD(+).

It belongs to the short-chain dehydrogenases/reductases (SDR) family. Homotetramer.

The catalysed reaction is (S)-acetoin + NAD(+) = diacetyl + NADH + H(+). Catalyzes the reversible reduction of (S)-acetoin to 2,3-butanediol in the presence of NADH. This chain is Diacetyl reductase [(S)-acetoin forming] (budC), found in Klebsiella pneumoniae.